Consider the following 159-residue polypeptide: 2-C-methyl-D-erythritol 2,4-cyclodiphosphate synthase (159 aa).

A divalent metal cation-binding residues include Asp-10 and His-12. 4-CDP-2-C-methyl-D-erythritol 2-phosphate-binding positions include 10–12 and 36–37; these read DVH and HS. His-44 is an a divalent metal cation binding site. 4-CDP-2-C-methyl-D-erythritol 2-phosphate-binding positions include 58–60, 134–137, Phe-141, and Arg-144; these read DIG and TTSE.

It belongs to the IspF family. As to quaternary structure, homotrimer. A divalent metal cation serves as cofactor.

The catalysed reaction is 4-CDP-2-C-methyl-D-erythritol 2-phosphate = 2-C-methyl-D-erythritol 2,4-cyclic diphosphate + CMP. Its pathway is isoprenoid biosynthesis; isopentenyl diphosphate biosynthesis via DXP pathway; isopentenyl diphosphate from 1-deoxy-D-xylulose 5-phosphate: step 4/6. Its function is as follows. Involved in the biosynthesis of isopentenyl diphosphate (IPP) and dimethylallyl diphosphate (DMAPP), two major building blocks of isoprenoid compounds. Catalyzes the conversion of 4-diphosphocytidyl-2-C-methyl-D-erythritol 2-phosphate (CDP-ME2P) to 2-C-methyl-D-erythritol 2,4-cyclodiphosphate (ME-CPP) with a corresponding release of cytidine 5-monophosphate (CMP). This is 2-C-methyl-D-erythritol 2,4-cyclodiphosphate synthase from Cereibacter sphaeroides (strain ATCC 17029 / ATH 2.4.9) (Rhodobacter sphaeroides).